The primary structure comprises 177 residues: Adenine phosphoribosyltransferase (177 aa).

It belongs to the purine/pyrimidine phosphoribosyltransferase family. Homodimer.

It localises to the cytoplasm. The catalysed reaction is AMP + diphosphate = 5-phospho-alpha-D-ribose 1-diphosphate + adenine. It participates in purine metabolism; AMP biosynthesis via salvage pathway; AMP from adenine: step 1/1. In terms of biological role, catalyzes a salvage reaction resulting in the formation of AMP, that is energically less costly than de novo synthesis. The sequence is that of Adenine phosphoribosyltransferase from Anaeromyxobacter sp. (strain Fw109-5).